Reading from the N-terminus, the 96-residue chain is MLILSVFCAVFYAFLTAIVANFSLKTLAIGATFVKSHLKSNPIPYGDLVADSLDFGNITPTVTLLFAILIAVLALKCEFSCSTSAPAGQASGRKVK.

The signal sequence occupies residues 1 to 30 (MLILSVFCAVFYAFLTAIVANFSLKTLAIG). At 31-54 (ATFVKSHLKSNPIPYGDLVADSLD) the chain is on the extracellular side. A helical membrane pass occupies residues 55–75 (FGNITPTVTLLFAILIAVLAL). Over 76–96 (KCEFSCSTSAPAGQASGRKVK) the chain is Cytoplasmic.

It localises to the membrane. This is an uncharacterized protein from Dictyostelium discoideum (Social amoeba).